Here is a 1505-residue protein sequence, read N- to C-terminus: Probable serine/threonine-protein kinase DDB_G0280133 (1505 aa).

3 PAS domains span residues Asn2–Gly72, Arg108–Gly178, and Asp215–His284. 2 disordered regions span residues Asp282–Ser348 and Arg398–Tyr533. 2 stretches are compositionally biased toward low complexity: residues Gln289–Thr314 and Ser328–Thr344. Basic and acidic residues-rich tracts occupy residues Arg398 to Asn407 and Glu415 to Glu430. Positions His431–Asp443 are enriched in basic residues. The segment covering Asn448 to Ser468 has biased composition (low complexity). Residues Ser479 to Ser489 are compositionally biased toward basic residues. Residues Ser515–Ser532 show a composition bias toward low complexity. The 264-residue stretch at Tyr542–Leu805 folds into the Protein kinase domain. ATP is bound by residues Leu548–Val556 and Lys571. Asp684 functions as the Proton acceptor in the catalytic mechanism. A compositionally biased stretch (low complexity) spans Asn855 to Asn960. 3 disordered regions span residues Asn855–Gln1048, Gln1072–Gln1091, and Gln1181–Asn1358. The stretch at Asn903 to Asn939 forms a coiled coil. The span at Leu961–Tyr974 shows a compositional bias: polar residues. Low complexity-rich tracts occupy residues Gln975–His1013 and Gln1022–Gln1048. Polar residues predominate over residues Gln1072–Asn1082. A coiled-coil region spans residues Ile1125–Asp1189. Basic and acidic residues predominate over residues Ser1202 to Asn1271. A compositionally biased stretch (low complexity) spans Arg1272–Asn1282. Composition is skewed to basic and acidic residues over residues Asn1283–Lys1301 and Asn1313–Phe1326. Over residues Ser1331–Arg1347 the composition is skewed to polar residues. Residues Phe1399–Ile1463 form the FHA domain.

The protein belongs to the protein kinase superfamily. CAMK Ser/Thr protein kinase family. SNF1 subfamily.

The enzyme catalyses L-seryl-[protein] + ATP = O-phospho-L-seryl-[protein] + ADP + H(+). It carries out the reaction L-threonyl-[protein] + ATP = O-phospho-L-threonyl-[protein] + ADP + H(+). In Dictyostelium discoideum (Social amoeba), this protein is Probable serine/threonine-protein kinase DDB_G0280133.